Reading from the N-terminus, the 268-residue chain is Hydroxyethylthiazole kinase (268 aa).

A substrate-binding site is contributed by Met45. Arg121 and Thr167 together coordinate ATP. Residue Gly194 participates in substrate binding.

It belongs to the Thz kinase family. Mg(2+) serves as cofactor.

The enzyme catalyses 5-(2-hydroxyethyl)-4-methylthiazole + ATP = 4-methyl-5-(2-phosphooxyethyl)-thiazole + ADP + H(+). The protein operates within cofactor biosynthesis; thiamine diphosphate biosynthesis; 4-methyl-5-(2-phosphoethyl)-thiazole from 5-(2-hydroxyethyl)-4-methylthiazole: step 1/1. Its function is as follows. Catalyzes the phosphorylation of the hydroxyl group of 4-methyl-5-beta-hydroxyethylthiazole (THZ). In Bacillus thuringiensis (strain Al Hakam), this protein is Hydroxyethylthiazole kinase.